The following is a 296-amino-acid chain: Nucleotide-binding protein M28_Spy0517 (296 aa).

13 to 20 (GMSGAGKT) serves as a coordination point for ATP. 63 to 66 (DMRS) is a binding site for GTP.

The protein belongs to the RapZ-like family.

Functionally, displays ATPase and GTPase activities. The sequence is that of Nucleotide-binding protein M28_Spy0517 from Streptococcus pyogenes serotype M28 (strain MGAS6180).